Consider the following 129-residue polypeptide: Small ribosomal subunit protein uS11 (129 aa).

The protein belongs to the universal ribosomal protein uS11 family. As to quaternary structure, part of the 30S ribosomal subunit. Interacts with proteins S7 and S18. Binds to IF-3.

Located on the platform of the 30S subunit, it bridges several disparate RNA helices of the 16S rRNA. Forms part of the Shine-Dalgarno cleft in the 70S ribosome. The sequence is that of Small ribosomal subunit protein uS11 from Marinobacter nauticus (strain ATCC 700491 / DSM 11845 / VT8) (Marinobacter aquaeolei).